The chain runs to 166 residues: Regulator of ribonuclease activity A (166 aa).

It belongs to the RraA family. In terms of assembly, homotrimer. Binds to both RNA-binding sites in the C-terminal region of Rne and to RhlB.

It localises to the cytoplasm. Its function is as follows. Globally modulates RNA abundance by binding to RNase E (Rne) and regulating its endonucleolytic activity. Can modulate Rne action in a substrate-dependent manner by altering the composition of the degradosome. Modulates RNA-binding and helicase activities of the degradosome. This Pasteurella multocida (strain Pm70) protein is Regulator of ribonuclease activity A.